A 265-amino-acid polypeptide reads, in one-letter code: Orotidine 5'-phosphate decarboxylase (265 aa).

Substrate contacts are provided by residues aspartate 37, 59–61 (KTH), 91–100 (DRKFADIGNT), tyrosine 217, and arginine 235. The active-site Proton donor is the lysine 93.

Belongs to the OMP decarboxylase family.

It catalyses the reaction orotidine 5'-phosphate + H(+) = UMP + CO2. The protein operates within pyrimidine metabolism; UMP biosynthesis via de novo pathway; UMP from orotate: step 2/2. This is Orotidine 5'-phosphate decarboxylase (URA3) from Diutina rugosa (Yeast).